Consider the following 343-residue polypeptide: 4-hydroxy-2-oxovalerate aldolase (343 aa).

The region spanning 5–256 (ILLCDPTLRD…ETGIDLYKIL (252 aa)) is the Pyruvate carboxyltransferase domain. 13–14 (RD) contacts substrate. Asp14 serves as a coordination point for Mn(2+). The active-site Proton acceptor is the His17. 2 residues coordinate substrate: Ser168 and His195. Mn(2+) contacts are provided by His195 and His197.

This sequence belongs to the 4-hydroxy-2-oxovalerate aldolase family. In terms of assembly, interacts with MhpF.

The enzyme catalyses (S)-4-hydroxy-2-oxopentanoate = acetaldehyde + pyruvate. It functions in the pathway aromatic compound metabolism; 3-phenylpropanoate degradation. Its function is as follows. Catalyzes the retro-aldol cleavage of 4-hydroxy-2-oxopentanoate to pyruvate and acetaldehyde. Is involved in the meta-cleavage pathway for the degradation of aromatic compounds. The sequence is that of 4-hydroxy-2-oxovalerate aldolase from Pectobacterium atrosepticum (strain SCRI 1043 / ATCC BAA-672) (Erwinia carotovora subsp. atroseptica).